The primary structure comprises 103 residues: Small ribosomal subunit protein uS10 (103 aa).

It belongs to the universal ribosomal protein uS10 family. Part of the 30S ribosomal subunit.

Its function is as follows. Involved in the binding of tRNA to the ribosomes. The protein is Small ribosomal subunit protein uS10 of Korarchaeum cryptofilum (strain OPF8).